Reading from the N-terminus, the 129-residue chain is Small ribosomal subunit protein uS11 (129 aa).

It belongs to the universal ribosomal protein uS11 family. In terms of assembly, part of the 30S ribosomal subunit. Interacts with proteins S7 and S18. Binds to IF-3.

In terms of biological role, located on the platform of the 30S subunit, it bridges several disparate RNA helices of the 16S rRNA. Forms part of the Shine-Dalgarno cleft in the 70S ribosome. The protein is Small ribosomal subunit protein uS11 of Staphylococcus carnosus (strain TM300).